A 265-amino-acid polypeptide reads, in one-letter code: 3'(2'),5'-bisphosphate nucleotidase CysQ (265 aa).

Positions 80, 99, 101, 102, and 222 each coordinate Mg(2+). Glutamate 80 is a binding site for substrate. Substrate contacts are provided by residues 101-104 and aspartate 222; that span reads LDGT.

The protein belongs to the inositol monophosphatase superfamily. CysQ family. Requires Mg(2+) as cofactor.

Its subcellular location is the cell inner membrane. It carries out the reaction adenosine 3',5'-bisphosphate + H2O = AMP + phosphate. Functionally, converts adenosine-3',5'-bisphosphate (PAP) to AMP. In Buchnera aphidicola subsp. Acyrthosiphon pisum (strain APS) (Acyrthosiphon pisum symbiotic bacterium), this protein is 3'(2'),5'-bisphosphate nucleotidase CysQ.